A 66-amino-acid polypeptide reads, in one-letter code: Large ribosomal subunit protein bL35 (66 aa).

Over residues 1-26 (MPKMKTHRGAAKRVKRTASGKLKRSR) the composition is skewed to basic residues. Residues 1–49 (MPKMKTHRGAAKRVKRTASGKLKRSRAFTSHLFANKSTKQKRKLRKASL) are disordered.

This sequence belongs to the bacterial ribosomal protein bL35 family.

The chain is Large ribosomal subunit protein bL35 from Staphylococcus carnosus (strain TM300).